Reading from the N-terminus, the 283-residue chain is Nucleoid occlusion protein (283 aa).

The disordered stretch occupies residues 1–21; sequence MKHSFSRFFGFGEKEEEPEIA. The H-T-H motif DNA-binding region spans 148 to 167; the sequence is EALAQRLGKGQSTIANKLRL.

The protein belongs to the ParB family.

The protein localises to the cytoplasm. It localises to the nucleoid. Its function is as follows. Effects nucleoid occlusion by binding relatively nonspecifically to DNA and preventing the assembly of the division machinery in the vicinity of the nucleoid, especially under conditions that disturb the cell cycle. It helps to coordinate cell division and chromosome segregation by preventing the formation of the Z ring through the nucleoid, which would cause chromosome breakage. The protein is Nucleoid occlusion protein of Bacillus velezensis (strain DSM 23117 / BGSC 10A6 / LMG 26770 / FZB42) (Bacillus amyloliquefaciens subsp. plantarum).